We begin with the raw amino-acid sequence, 220 residues long: 2-hydroxy-3-keto-5-methylthiopentenyl-1-phosphate phosphatase (220 aa).

Belongs to the HAD-like hydrolase superfamily. MtnX family.

The enzyme catalyses 2-hydroxy-5-methylsulfanyl-3-oxopent-1-enyl phosphate + H2O = 1,2-dihydroxy-5-(methylsulfanyl)pent-1-en-3-one + phosphate. It functions in the pathway amino-acid biosynthesis; L-methionine biosynthesis via salvage pathway; L-methionine from S-methyl-5-thio-alpha-D-ribose 1-phosphate: step 4/6. Functionally, dephosphorylates 2-hydroxy-3-keto-5-methylthiopentenyl-1-phosphate (HK-MTPenyl-1-P) yielding 1,2-dihydroxy-3-keto-5-methylthiopentene (DHK-MTPene). This is 2-hydroxy-3-keto-5-methylthiopentenyl-1-phosphate phosphatase from Geobacillus kaustophilus (strain HTA426).